Reading from the N-terminus, the 787-residue chain is Lon protease (787 aa).

Positions 12–210 constitute a Lon N-terminal domain; it reads LPLIPLRGLA…LIYSILLEEI (199 aa). 362 to 369 lines the ATP pocket; the sequence is GPPGTGKT. The Lon proteolytic domain occupies 599–780; sequence NPQIGLVNGL…DEVLEQALLK (182 aa). Catalysis depends on residues Ser-686 and Lys-729.

It belongs to the peptidase S16 family. As to quaternary structure, homohexamer. Organized in a ring with a central cavity.

It is found in the cytoplasm. The enzyme catalyses Hydrolysis of proteins in presence of ATP.. In terms of biological role, ATP-dependent serine protease that mediates the selective degradation of mutant and abnormal proteins as well as certain short-lived regulatory proteins. Required for cellular homeostasis and for survival from DNA damage and developmental changes induced by stress. Degrades polypeptides processively to yield small peptide fragments that are 5 to 10 amino acids long. Binds to DNA in a double-stranded, site-specific manner. The polypeptide is Lon protease (Clostridioides difficile (strain 630) (Peptoclostridium difficile)).